A 460-amino-acid polypeptide reads, in one-letter code: ATP synthase subunit beta (460 aa).

150 to 157 is a binding site for ATP; sequence GGAGVGKT.

This sequence belongs to the ATPase alpha/beta chains family. F-type ATPases have 2 components, CF(1) - the catalytic core - and CF(0) - the membrane proton channel. CF(1) has five subunits: alpha(3), beta(3), gamma(1), delta(1), epsilon(1). CF(0) has three main subunits: a(1), b(2) and c(9-12). The alpha and beta chains form an alternating ring which encloses part of the gamma chain. CF(1) is attached to CF(0) by a central stalk formed by the gamma and epsilon chains, while a peripheral stalk is formed by the delta and b chains.

The protein resides in the cell inner membrane. It carries out the reaction ATP + H2O + 4 H(+)(in) = ADP + phosphate + 5 H(+)(out). Its function is as follows. Produces ATP from ADP in the presence of a proton gradient across the membrane. The catalytic sites are hosted primarily by the beta subunits. This chain is ATP synthase subunit beta, found in Pectobacterium atrosepticum (strain SCRI 1043 / ATCC BAA-672) (Erwinia carotovora subsp. atroseptica).